We begin with the raw amino-acid sequence, 212 residues long: MLTSYGTSTIVKTTLLCLLMCVVALFIPFIAQVWLIGFAVVFLLFTLYFFRDPERKTPNETAIIVSPADGKVMQIAPCTLPDSGLPATRVSIFMSPFNVHVNRVPISGKVTMVRYVPGKFLMAFDHASMEHNERMEIALDNGQFEVRFSQVSGFIARRIVCTLQPNDVVTIGRRFGMIKFGSRVDMVLPATVRCCVQQGDNVHAGETIIGRY.

The Schiff-base intermediate with substrate; via pyruvic acid role is filled by Ser182. A Pyruvic acid (Ser); by autocatalysis modification is found at Ser182.

This sequence belongs to the phosphatidylserine decarboxylase family. PSD-A subfamily. In terms of assembly, heterodimer of a large membrane-associated beta subunit and a small pyruvoyl-containing alpha subunit. Pyruvate is required as a cofactor. Post-translationally, is synthesized initially as an inactive proenzyme. Formation of the active enzyme involves a self-maturation process in which the active site pyruvoyl group is generated from an internal serine residue via an autocatalytic post-translational modification. Two non-identical subunits are generated from the proenzyme in this reaction, and the pyruvate is formed at the N-terminus of the alpha chain, which is derived from the carboxyl end of the proenzyme. The post-translation cleavage follows an unusual pathway, termed non-hydrolytic serinolysis, in which the side chain hydroxyl group of the serine supplies its oxygen atom to form the C-terminus of the beta chain, while the remainder of the serine residue undergoes an oxidative deamination to produce ammonia and the pyruvoyl prosthetic group on the alpha chain.

It is found in the cell membrane. It catalyses the reaction a 1,2-diacyl-sn-glycero-3-phospho-L-serine + H(+) = a 1,2-diacyl-sn-glycero-3-phosphoethanolamine + CO2. The protein operates within phospholipid metabolism; phosphatidylethanolamine biosynthesis; phosphatidylethanolamine from CDP-diacylglycerol: step 2/2. Its function is as follows. Catalyzes the formation of phosphatidylethanolamine (PtdEtn) from phosphatidylserine (PtdSer). This is Phosphatidylserine decarboxylase proenzyme from Chlorobium chlorochromatii (strain CaD3).